Consider the following 223-residue polypeptide: Large ribosomal subunit protein uL4 (223 aa).

The tract at residues 49–106 (AAARQGTHSTKTRGEVSGGGRKPYRQKGTGRARQGSTRAPQFTGGGVVHGPKPRDYSQ) is disordered.

This sequence belongs to the universal ribosomal protein uL4 family. As to quaternary structure, part of the 50S ribosomal subunit.

Its function is as follows. One of the primary rRNA binding proteins, this protein initially binds near the 5'-end of the 23S rRNA. It is important during the early stages of 50S assembly. It makes multiple contacts with different domains of the 23S rRNA in the assembled 50S subunit and ribosome. Forms part of the polypeptide exit tunnel. This Mycobacterium bovis (strain ATCC BAA-935 / AF2122/97) protein is Large ribosomal subunit protein uL4.